The chain runs to 498 residues: ATP synthase subunit alpha 1 (498 aa).

164–171 is an ATP binding site; that stretch reads GNRQSGKT.

It belongs to the ATPase alpha/beta chains family. F-type ATPases have 2 components, CF(1) - the catalytic core - and CF(0) - the membrane proton channel. CF(1) has five subunits: alpha(3), beta(3), gamma(1), delta(1), epsilon(1). CF(0) has three main subunits: a(1), b(2) and c(9-12). The alpha and beta chains form an alternating ring which encloses part of the gamma chain. CF(1) is attached to CF(0) by a central stalk formed by the gamma and epsilon chains, while a peripheral stalk is formed by the delta and b chains.

The protein resides in the cell membrane. It carries out the reaction ATP + H2O + 4 H(+)(in) = ADP + phosphate + 5 H(+)(out). In terms of biological role, produces ATP from ADP in the presence of a proton gradient across the membrane. The alpha chain is a regulatory subunit. This is ATP synthase subunit alpha 1 from Listeria welshimeri serovar 6b (strain ATCC 35897 / DSM 20650 / CCUG 15529 / CIP 8149 / NCTC 11857 / SLCC 5334 / V8).